Here is a 150-residue protein sequence, read N- to C-terminus: MSEIMTKNMARNVFYGGSIFFILIFGALTVHSHIYARTKAVDESQLTPSVVEGKHIWERNACIDCHTLLGEGAYFAPELGNVMKRWGVQDDPDSAFETLKGWMESMPTGIEGRRQMPRFDLTDEEFRALSDFLLWTGTINTQNWPPNDAG.

Residues 13 to 29 traverse the membrane as a helical; Signal-anchor segment; that stretch reads VFYGGSIFFILIFGALT. Positions 62, 65, and 66 each coordinate heme c.

Heterodimer of cytochromes b (large subunit) and c (small subunit).

The protein resides in the cell membrane. Component of the anaerobic respiratory chain that transforms nitrate to dinitrogen (denitrification). The polypeptide is Nitric oxide reductase subunit C (norC) (Paracoccus denitrificans).